The chain runs to 122 residues: Small ribosomal subunit protein uS12c (122 aa).

It belongs to the universal ribosomal protein uS12 family. Part of the 30S ribosomal subunit.

The protein resides in the plastid. Its subcellular location is the chloroplast. In terms of biological role, with S4 and S5 plays an important role in translational accuracy. Located at the interface of the 30S and 50S subunits. This Chloranthus spicatus (Chulantree) protein is Small ribosomal subunit protein uS12c (rps12).